The chain runs to 452 residues: Membrane-bound lytic murein transglycosylase D (452 aa).

The N-terminal stretch at 1–15 (MKAKAILLASVLLVG) is a signal peptide. The N-palmitoyl cysteine moiety is linked to residue Cys16. Cys16 carries the S-diacylglycerol cysteine lipid modification. Residues 113-198 (NMPMELVLLP…LLTVAAYNSG (86 aa)) are slt-type domain. Glu125 is a catalytic residue. 2 consecutive LysM domains span residues 341–384 (RVYT…SLTI) and 400–448 (ITYR…KNNN).

It belongs to the transglycosylase Slt family.

Its subcellular location is the cell membrane. The enzyme catalyses Exolytic cleavage of the (1-&gt;4)-beta-glycosidic linkage between N-acetylmuramic acid (MurNAc) and N-acetylglucosamine (GlcNAc) residues in peptidoglycan, from either the reducing or the non-reducing ends of the peptidoglycan chains, with concomitant formation of a 1,6-anhydrobond in the MurNAc residue.. Its function is as follows. Murein-degrading enzyme. May play a role in recycling of muropeptides during cell elongation and/or cell division. This chain is Membrane-bound lytic murein transglycosylase D (mltD), found in Escherichia coli O6:H1 (strain CFT073 / ATCC 700928 / UPEC).